Consider the following 673-residue polypeptide: UvrABC system protein B (673 aa).

Positions 26–414 (EGLEDGLAHQ…GGDVVDQVVR (389 aa)) constitute a Helicase ATP-binding domain. 39-46 (GVTGSGKT) provides a ligand contact to ATP. A Beta-hairpin motif is present at residues 92–115 (YYDYYQPEAYVPSSDTFIEKDASV). In terms of domain architecture, Helicase C-terminal spans 431–597 (QVDDLLSEIR…GLNKKVVDIL (167 aa)). The region spanning 633–668 (QQKIHELEGLMMQHAQNLEFEEAAQIRDQLHQLREL) is the UVR domain.

This sequence belongs to the UvrB family. In terms of assembly, forms a heterotetramer with UvrA during the search for lesions. Interacts with UvrC in an incision complex.

The protein resides in the cytoplasm. The UvrABC repair system catalyzes the recognition and processing of DNA lesions. A damage recognition complex composed of 2 UvrA and 2 UvrB subunits scans DNA for abnormalities. Upon binding of the UvrA(2)B(2) complex to a putative damaged site, the DNA wraps around one UvrB monomer. DNA wrap is dependent on ATP binding by UvrB and probably causes local melting of the DNA helix, facilitating insertion of UvrB beta-hairpin between the DNA strands. Then UvrB probes one DNA strand for the presence of a lesion. If a lesion is found the UvrA subunits dissociate and the UvrB-DNA preincision complex is formed. This complex is subsequently bound by UvrC and the second UvrB is released. If no lesion is found, the DNA wraps around the other UvrB subunit that will check the other stand for damage. This Shigella flexneri protein is UvrABC system protein B.